The sequence spans 72 residues: Cell division protein ZapB (72 aa).

Residues 2 to 72 (SLEILDQLEG…RSLLGQIDNV (71 aa)) adopt a coiled-coil conformation. Residues 34–57 (NQQAQQANDELRSENEQLKGEHNN) are disordered. Over residues 42–57 (DELRSENEQLKGEHNN) the composition is skewed to basic and acidic residues.

Belongs to the ZapB family. Homodimer. The ends of the coiled-coil dimer bind to each other, forming polymers. Interacts with FtsZ.

Its subcellular location is the cytoplasm. Its function is as follows. Non-essential, abundant cell division factor that is required for proper Z-ring formation. It is recruited early to the divisome by direct interaction with FtsZ, stimulating Z-ring assembly and thereby promoting cell division earlier in the cell cycle. Its recruitment to the Z-ring requires functional FtsA or ZipA. The chain is Cell division protein ZapB from Mannheimia succiniciproducens (strain KCTC 0769BP / MBEL55E).